The sequence spans 182 residues: Isopentenyl-diphosphate Delta-isomerase (182 aa).

2 residues coordinate Mn(2+): His23 and His30. The region spanning 28–162 (PRHLAFSCHV…PWAFSPWLVE (135 aa)) is the Nudix hydrolase domain. The active site involves Cys65. A Mg(2+)-binding site is contributed by Cys65. A Mn(2+)-binding site is contributed by His67. Residue Glu85 participates in Mg(2+) binding. 2 residues coordinate Mn(2+): Glu112 and Glu114. Glu114 is a catalytic residue.

This sequence belongs to the IPP isomerase type 1 family. Requires Mg(2+) as cofactor. The cofactor is Mn(2+).

The protein localises to the cytoplasm. The enzyme catalyses isopentenyl diphosphate = dimethylallyl diphosphate. It participates in isoprenoid biosynthesis; dimethylallyl diphosphate biosynthesis; dimethylallyl diphosphate from isopentenyl diphosphate: step 1/1. Its function is as follows. Catalyzes the 1,3-allylic rearrangement of the homoallylic substrate isopentenyl (IPP) to its highly electrophilic allylic isomer, dimethylallyl diphosphate (DMAPP). This is Isopentenyl-diphosphate Delta-isomerase from Brevibacterium linens.